The sequence spans 184 residues: dITP/XTP pyrophosphatase (184 aa).

8–13 (TGNKGK) is a substrate binding site. Positions 37 and 66 each coordinate Mg(2+). Residue Asp-66 is the Proton acceptor of the active site. Substrate-binding positions include Ser-67, 142–145 (FGYD), Lys-163, and 168–169 (HR).

It belongs to the HAM1 NTPase family. In terms of assembly, homodimer. The cofactor is Mg(2+).

The enzyme catalyses XTP + H2O = XMP + diphosphate + H(+). It catalyses the reaction dITP + H2O = dIMP + diphosphate + H(+). The catalysed reaction is ITP + H2O = IMP + diphosphate + H(+). Its function is as follows. Pyrophosphatase that catalyzes the hydrolysis of nucleoside triphosphates to their monophosphate derivatives, with a high preference for the non-canonical purine nucleotides XTP (xanthosine triphosphate), dITP (deoxyinosine triphosphate) and ITP. Seems to function as a house-cleaning enzyme that removes non-canonical purine nucleotides from the nucleotide pool, thus preventing their incorporation into DNA/RNA and avoiding chromosomal lesions. The polypeptide is dITP/XTP pyrophosphatase (Methanosarcina acetivorans (strain ATCC 35395 / DSM 2834 / JCM 12185 / C2A)).